Reading from the N-terminus, the 108-residue chain is Large ribosomal subunit protein uL24 (108 aa).

The protein belongs to the universal ribosomal protein uL24 family. Part of the 50S ribosomal subunit.

In terms of biological role, one of two assembly initiator proteins, it binds directly to the 5'-end of the 23S rRNA, where it nucleates assembly of the 50S subunit. One of the proteins that surrounds the polypeptide exit tunnel on the outside of the subunit. In Frankia casuarinae (strain DSM 45818 / CECT 9043 / HFP020203 / CcI3), this protein is Large ribosomal subunit protein uL24.